A 107-amino-acid polypeptide reads, in one-letter code: uncharacterized protein (107 aa).

Residues 88 to 97 (EEKKEKDKGK) show a composition bias toward basic and acidic residues. Residues 88–107 (EEKKEKDKGKKGLLSRLKFW) form a disordered region. A compositionally biased stretch (basic residues) spans 98–107 (KGLLSRLKFW).

This is an uncharacterized protein from Methanocaldococcus jannaschii (strain ATCC 43067 / DSM 2661 / JAL-1 / JCM 10045 / NBRC 100440) (Methanococcus jannaschii).